The chain runs to 63 residues: Beta-defensin 3 (63 aa).

Residues 1–20 form the signal peptide; the sequence is MRIHYLLFAFLLVLLSPPAA. A propeptide spanning residues 21-22 is cleaved from the precursor; that stretch reads FS. 3 disulfide bridges follow: cysteine 31-cysteine 59, cysteine 38-cysteine 52, and cysteine 42-cysteine 60.

It belongs to the beta-defensin family. LAP/TAP subfamily. In terms of tissue distribution, highest expression in salivary glands, epididymis, ovary and pancreas and to a lesser extent in lung, liver and brain. Low or no expression in skeletal muscle and tongue.

It localises to the secreted. Its function is as follows. Antimicrobial activity against Gram-negative bacteria E.coli and P.aeruginosa. This chain is Beta-defensin 3 (Defb3), found in Mus musculus (Mouse).